The sequence spans 153 residues: Acylphosphatase-like protein MJ0553 (153 aa).

The 99-residue stretch at 4-102 folds into the Acylphosphatase-like domain; it reads TYELIIYGRV…SRLSSDDILE (99 aa).

The polypeptide is Acylphosphatase-like protein MJ0553 (Methanocaldococcus jannaschii (strain ATCC 43067 / DSM 2661 / JAL-1 / JCM 10045 / NBRC 100440) (Methanococcus jannaschii)).